Reading from the N-terminus, the 315-residue chain is Transcriptional regulator protein Pur-beta (315 aa).

Residues 1–39 (MADGDSGSERGGGGPGSFQPAPRGGGGPGGEQETQELAS) are disordered. A2 is subject to N-acetylalanine. 2 positions are modified to phosphoserine: S6 and S8. At R23 the chain carries Omega-N-methylarginine. Positions 28 to 254 (PGGEQETQEL…GVFLRVSEVK (227 aa)) are DNA-binding. Position 34 is a phosphothreonine (T34). S104 bears the Phosphoserine mark. R155 is subject to Omega-N-methylarginine. A disordered region spans residues 200 to 220 (DDELAGGPGGGAGGPGGGLYG). Gly residues predominate over residues 205–219 (GGPGGGAGGPGGGLY). K270 bears the N6-acetyllysine mark. Basic and acidic residues predominate over residues 288 to 298 (RQRDKLYERRG). The segment at 288–315 (RQRDKLYERRGGGSGGGDESEGEEVDED) is disordered. Position 297 is an omega-N-methylarginine (R297). 2 positions are modified to phosphoserine: S301 and S307. Residues 305–315 (DESEGEEVDED) are compositionally biased toward acidic residues.

The protein belongs to the PUR DNA-binding protein family. In terms of assembly, homodimer, heterodimer with PURA and heterotrimer with PURA and YBX1/Y-box protein 1. Interacts with MYOCD and SRF. Expressed in muscle cells and in the liver.

The protein localises to the nucleus. Functionally, transcriptional regulator which can act as an activator or a repressor. Represses the transcription of ACTA2 in fibroblasts and smooth muscle cells via its ability to interact with the purine-rich strand of a MCAT- containing element in the 5' flanking region of the gene. Represses the transcription of MYOCD, capable of repressing all isoforms of MYOCD but the magnitude of the repressive effects is most notable for the SMC- specific isoforms. Promotes hepatic glucose production by activating the transcription of ADCY6, leading to cAMP accumulation, increased PKA activity, CREB activation, and increased transcription of PCK1 and G6PC genes. Has capacity to bind repeated elements in single-stranded DNA such as the purine-rich single strand of the PUR element located upstream of the MYC gene. Participates in transcriptional and translational regulation of alpha-MHC expression in cardiac myocytes by binding to the purine-rich negative regulatory (PNR) element. Modulates constitutive liver galectin-3 gene transcription by binding to its promoter. May play a role in the dendritic transport of a subset of mRNAs. This chain is Transcriptional regulator protein Pur-beta (Purb), found in Rattus norvegicus (Rat).